Reading from the N-terminus, the 86-residue chain is Large ribosomal subunit protein bL27 (86 aa).

A disordered region spans residues 1 to 26 (MATKKAGGSSRNGRDSAGRRLGVKKS).

It belongs to the bacterial ribosomal protein bL27 family.

The protein is Large ribosomal subunit protein bL27 of Rickettsia akari (strain Hartford).